A 282-amino-acid chain; its full sequence is Protoheme IX farnesyltransferase (282 aa).

9 helical membrane-spanning segments follow: residues 9–29 (LAKP…FLLA), 39–59 (LPLF…GCVF), 79–99 (LVTG…LLIL), 102–122 (LVLY…GFIV), 139–159 (VLGG…VVNI), 165–185 (LALF…IAML), 210–230 (IMLF…VLGS), 231–251 (ADLF…YKSI), and 261–281 (VFAK…CLTM).

The protein belongs to the UbiA prenyltransferase family. Protoheme IX farnesyltransferase subfamily.

The protein localises to the cell inner membrane. The enzyme catalyses heme b + (2E,6E)-farnesyl diphosphate + H2O = Fe(II)-heme o + diphosphate. The protein operates within porphyrin-containing compound metabolism; heme O biosynthesis; heme O from protoheme: step 1/1. Functionally, converts heme B (protoheme IX) to heme O by substitution of the vinyl group on carbon 2 of heme B porphyrin ring with a hydroxyethyl farnesyl side group. The sequence is that of Protoheme IX farnesyltransferase from Francisella tularensis subsp. holarctica (strain LVS).